The chain runs to 415 residues: Coiled-coil domain-containing glutamate-rich protein 1 (415 aa).

A compositionally biased stretch (basic and acidic residues) spans 1–11; sequence MTQTLDTKEDP. Disordered stretches follow at residues 1 to 20, 29 to 64, 133 to 162, 202 to 241, and 255 to 372; these read MTQT…GWAS, FGPR…QQYG, RPPG…SPPV, QEKL…GQED, and PSLV…PLEM. 2 stretches are compositionally biased toward basic residues: residues 31-46 and 135-156; these read PRRR…RPRY and PGRK…RRSA. Coiled coils occupy residues 197–224 and 264–366; these read EDMR…STAS and DEEK…EEEN. Positions 211–220 are enriched in low complexity; the sequence is ALRAQQAQAA. A compositionally biased stretch (acidic residues) spans 275–363; the sequence is VEEEEEGERE…EGLAEDEQTE (89 aa).

Its subcellular location is the nucleus. Its function is as follows. Regulator of histone epigenetic modifications and chromatin compaction into the sperm head, required for histone-to-protamine (HTP) transition. HTP is a key event in which somatic histones are first replaced by testis-specific histone variants, then transition proteins (TNPs) are incorporated into the spermatid nucleus, and finally protamines (PRMs) replace the TNPs to promote chromatin condensation. The chain is Coiled-coil domain-containing glutamate-rich protein 1 (CCER1) from Bos taurus (Bovine).